A 315-amino-acid chain; its full sequence is Putative steroid dehydrogenase 3 (315 aa).

NADP(+) is bound at residue 47-76; sequence ASWAVITGGTDGIGKSFSFELAKRGFNIYI. The active site involves Y202.

This sequence belongs to the short-chain dehydrogenases/reductases (SDR) family. 17-beta-HSD 3 subfamily.

This Caenorhabditis elegans protein is Putative steroid dehydrogenase 3 (stdh-3).